Here is a 1041-residue protein sequence, read N- to C-terminus: SGGFDFSFLPQPPQEKAHDGGRYYLGPGPMGLMGPRGPPGASGAPGPQGFGPAGEPGEPGQTGPAGARGPAGPPGKAGEDGHPGKPGRPGERGVVGPQGARGFPGTPGLPGFKGIRGHNGLDGLKGQPGAPGVKGEPGAPGENGTPGQTGARGLPGERGRVGAPGPAGRGSDGSVGPVGPAGPIGSAGPPGFPGAPGPKGELGPVGNTGPSGPAGPRGEQGLPGVSGPVGPPGNPGANGLTGAKGAAGLPGVAGAPGLPGPRGIPGPVGASGATGARGLVGEPGPAGSKGESGGKGEPGSAGPQGPPGSSGEEGKRGPSGESGSTGPTGPPGLRGGPGSRGLPGADGRAGVIGPAGARGASGPAGVRGPSGDTGRPGEPGLMGARGLPGSPGNVGPAGKEGPAGLPGIDGRPGPIGPAGARGEAGNIGFPGPKGPAGDPGKAGEKGHAGLAGNRGAGAQGPPGLQGVQGGKGEQGPAGPPGFQGLPGPAGTTGEVGKPGERGIPGEFGLPGPAGPRGERGPSGESGAVGPSGAIGSRGPSGPPGPDGNKGEPGVVGAPGTAGPAGSGGLPGERGAAGIPGGKGEKGETGLRGEVGTTGRDGARGAPGAVGAPGPAGATGDRGEAGAAGPAGPAGPRGSPGERGEVGPAGPNGFAGPAGAAGQPGAKGERGTKGPKGENGIVGPTGPVGSAGPAGPNGPAGPAGSRGDGGPPGVTGFPGAAGRTGPPGPSGITGPPGPPGAAGKEGLRGPRGDQGPVGRGETGAGGPPGFTGEKGPSGEPGTAGPPGTAGPQGLLGAPGILGLPGSRGERGLPGVAGAVGEPGPLGIGPPGARGPSGGVPGVNGAPGEAGRDGNPGSDGPPGRDGLPGHKGERGYAGNPGPVGAAGAPGPQGVGPVGKHGNRGEPGPVGSAGPVGALGPRGPSGPQGIRGDKGEAGDKGPRGLPGLKGHNGLQGLPGLAGQHGDQGPGPVGPAGPRGPAGPSGPPGKDGRTGHPGAVGPAGIRGSQGSQGPSGPAGPPGPPGPPGASGGGYDFGYEGDFYRA.

The tract at residues 1–1041 (SGGFDFSFLP…FGYEGDFYRA (1041 aa)) is disordered. A 4-hydroxyproline mark is found at Pro-10, Pro-13, Pro-39, and Pro-45. 2 stretches are compositionally biased toward low complexity: residues 25 to 45 (LGPG…SGAP) and 55 to 76 (EPGE…PPGK). Positions 77-91 (AGEDGHPGKPGRPGE) are enriched in basic and acidic residues. A 5-hydroxylysine; alternate modification is found at Lys-113. Lys-113 is a glycosylation site (O-linked (Gal...) hydroxylysine; alternate). Composition is skewed to low complexity over residues 174–189 (SVGP…SAGP) and 235–256 (PGAN…AGAP). Residues 290 to 299 (GESGGKGEPG) are compositionally biased toward gly residues. Over residues 300 to 310 (SAGPQGPPGSS) the composition is skewed to low complexity. Residues 332 to 341 (GLRGGPGSRG) are compositionally biased toward gly residues. The span at 354-370 (PAGARGASGPAGVRGPS) shows a compositional bias: low complexity. Pro-376 and Pro-379 each carry 4-hydroxyproline. Positions 405–424 (LPGIDGRPGPIGPAGARGEA) are enriched in low complexity. The span at 466 to 475 (GVQGGKGEQG) shows a compositional bias: gly residues. Low complexity-rich tracts occupy residues 522–539 (SGES…SRGP) and 551–561 (EPGVVGAPGTA). Positions 562-571 (GPAGSGGLPG) are enriched in gly residues. Low complexity-rich tracts occupy residues 594-638 (VGTT…PRGS) and 645-665 (VGPA…QPGA). Over residues 666-675 (KGERGTKGPK) the composition is skewed to basic and acidic residues. A compositionally biased stretch (low complexity) spans 683-693 (PTGPVGSAGPA). Gly residues predominate over residues 703 to 712 (GSRGDGGPPG). The span at 714-723 (TGFPGAAGRT) shows a compositional bias: low complexity. Gly residues predominate over residues 754–768 (GPVGRGETGAGGPPG). Composition is skewed to low complexity over residues 769-803 (FTGE…LGLP) and 811-821 (LPGVAGAVGEP). The segment covering 822–840 (GPLGIGPPGARGPSGGVPG) has biased composition (gly residues). Low complexity-rich tracts occupy residues 874–887 (YAGN…AGAP) and 903–918 (EPGP…ALGP). Residues 928–939 (RGDKGEAGDKGP) show a composition bias toward basic and acidic residues. Residues 1013–1023 (PAGPPGPPGPP) show a composition bias toward pro residues.

It belongs to the fibrillar collagen family. Trimers of one alpha 2(I) and two alpha 1(I) chains. Interacts (via C-terminus) with TMEM131 (via PapD-L domain); the interaction is direct and is involved in assembly and TRAPPIII ER-to-Golgi transport complex-dependent secretion of collagen. In terms of processing, prolines at the third position of the tripeptide repeating unit (G-X-Y) are hydroxylated in some or all of the chains. As to expression, expressed in bones.

It is found in the secreted. The protein localises to the extracellular space. Its subcellular location is the extracellular matrix. Type I collagen is a member of group I collagen (fibrillar forming collagen). This is Collagen alpha-2(I) chain from Paramylodon harlani (Harlan's ground sloth).